Reading from the N-terminus, the 173-residue chain is Ribulose bisphosphate carboxylase small subunit, chloroplastic 1 (173 aa).

The N-terminal 49 residues, 1-49, are a transit peptide targeting the chloroplast; it reads MASIPATVATVAQANMVAPFTGLKANAAFPVTKKVNDFSTLPSNGGRVQ.

Belongs to the RuBisCO small chain family. Heterohexadecamer of 8 large and 8 small subunits.

Its subcellular location is the plastid. It is found in the chloroplast. RuBisCO catalyzes two reactions: the carboxylation of D-ribulose 1,5-bisphosphate, the primary event in carbon dioxide fixation, as well as the oxidative fragmentation of the pentose substrate. Both reactions occur simultaneously and in competition at the same active site. Although the small subunit is not catalytic it is essential for maximal activity. The sequence is that of Ribulose bisphosphate carboxylase small subunit, chloroplastic 1 from Flaveria pringlei.